The following is an 891-amino-acid chain: Genome polyprotein 2 (891 aa).

Residues Thr-109–Gly-229 enclose the Peptidase C6 domain. Catalysis depends on for helper component proteinase activity residues Cys-117 and His-189. Residues Trp-502–Ser-540 form a disordered region.

This sequence belongs to the bymoviruses polyprotein 2 family. In terms of processing, the viral RNA2 of bymoviruses is expressed as a single polyprotein which undergoes post-translational proteolytic processing resulting in the production of at least two individual proteins. The HC-pro cleaves its C-terminus autocatalytically (Potential).

The catalysed reaction is Hydrolyzes a Gly-|-Gly bond at its own C-terminus, commonly in the sequence -Tyr-Xaa-Val-Gly-|-Gly, in the processing of the potyviral polyprotein.. The chain is Genome polyprotein 2 (RNA2) from Hordeum vulgare (Barley).